The following is a 500-amino-acid chain: Sodium/potassium/calcium exchanger 5 (500 aa).

Positions 1–29 (MQTKGGQTWARRALLLGILWATAHLPLSG) are cleaved as a signal peptide. The Extracellular segment spans residues 30–66 (TSLPQRLPRATGNSTQCVISPSSEFPEGFFTRQERRD). Residues 67–87 (GGIIIYFLIIVYMFMAISIVC) traverse the membrane as a helical segment. Residues 88-111 (DEYFLPSLEIISESLGLSQDVAGT) lie on the Cytoplasmic side of the membrane. Residues 112 to 132 (TFMAAGSSAPELVTAFLGVFI) form a helical membrane-spanning segment. The Extracellular portion of the chain corresponds to 133-136 (TKGD). A helical membrane pass occupies residues 137 to 157 (IGISTILGSAIYNLLGICAAC). The Cytoplasmic segment spans residues 158 to 169 (GLLSNTVSTLSC). A helical membrane pass occupies residues 170-190 (WPLFRDCAAYTISAAAVLGII). The Extracellular portion of the chain corresponds to 191 to 195 (YDNQV). The chain crosses the membrane as a helical span at residues 196–216 (YWYEGALLLLIYGLYVLVLCF). The Cytoplasmic portion of the chain corresponds to 217–302 (DIKINQYIIK…PSVFNMPEAD (86 aa)). Residues 303 to 323 (LKRIFWVLSLPIITLLFLTTP) traverse the membrane as a helical segment. Over 324–333 (DCRKKFWKNY) the chain is Extracellular. A helical membrane pass occupies residues 334–354 (FVITFFMSAIWISAFTYILVW). The Cytoplasmic portion of the chain corresponds to 355–368 (MVTITGETLEIPDT). The chain crosses the membrane as a helical span at residues 369-389 (VMGLTLLAAGTSIPDTIASVL). Topologically, residues 390–399 (VARKGKGDMA) are extracellular. A helical membrane pass occupies residues 400–420 (MSNIVGSNVFDMLCLGIPWFI). At 421-437 (KTAFINGSAPAEVNSRG) the chain is on the cytoplasmic side. The chain crosses the membrane as a helical span at residues 438-458 (LTYITISLNISIIFLFLAVHF). Over 459-468 (NGWKLDRKLG) the chain is Extracellular. Residues 469–489 (IVCLLSYLGLATLSVLYELGI) form a helical membrane-spanning segment. Topologically, residues 490–500 (IGNNKIRGCGG) are cytoplasmic.

This sequence belongs to the Ca(2+):cation antiporter (CaCA) (TC 2.A.19) family. SLC24A subfamily.

It localises to the golgi apparatus. The protein resides in the trans-Golgi network membrane. The protein localises to the melanosome. It carries out the reaction Ca(2+)(out) + K(+)(out) + 4 Na(+)(in) = Ca(2+)(in) + K(+)(in) + 4 Na(+)(out). Functionally, calcium, potassium:sodium antiporter that transports 1 Ca(2+) and 1 K(+) to the melanosome in exchange for 4 cytoplasmic Na(+). Involved in pigmentation, possibly by participating in ion transport in melanosomes. Predominant sodium-calcium exchanger in melanocytes. The polypeptide is Sodium/potassium/calcium exchanger 5 (Homo sapiens (Human)).